The following is a 289-amino-acid chain: Polyamine aminopropyltransferase (289 aa).

In terms of domain architecture, PABS spans 5–238; the sequence is TVWHETLHDQ…GIMTFAWATD (234 aa). Residue Q33 participates in S-methyl-5'-thioadenosine binding. Spermidine contacts are provided by H64 and D88. S-methyl-5'-thioadenosine is bound by residues E108 and 140–141; that span reads DG. D158 (proton acceptor) is an active-site residue. 158-161 lines the spermidine pocket; it reads DCTD. P165 is an S-methyl-5'-thioadenosine binding site.

Belongs to the spermidine/spermine synthase family. As to quaternary structure, homodimer or homotetramer.

The protein localises to the cytoplasm. The enzyme catalyses S-adenosyl 3-(methylsulfanyl)propylamine + putrescine = S-methyl-5'-thioadenosine + spermidine + H(+). The protein operates within amine and polyamine biosynthesis; spermidine biosynthesis; spermidine from putrescine: step 1/1. Catalyzes the irreversible transfer of a propylamine group from the amino donor S-adenosylmethioninamine (decarboxy-AdoMet) to putrescine (1,4-diaminobutane) to yield spermidine. This chain is Polyamine aminopropyltransferase, found in Enterobacter sp. (strain 638).